The sequence spans 396 residues: Probable isocitrate dehydrogenase [NAD] gamma 2, mitochondrial (396 aa).

The transit peptide at 1–25 directs the protein to the mitochondrion; sequence MLAVTSCSMKTVLQYAVFLGHSREV. Residue threonine 117 participates in citrate binding. Residues arginine 133, arginine 164, and aspartate 251 each coordinate substrate. Aspartate 251 lines the Mn(2+) pocket. Asparagine 321 is an ADP binding site.

Belongs to the isocitrate and isopropylmalate dehydrogenases family. In terms of assembly, heterooligomer of subunits alpha (IDH3A), beta (IDH3B), and gamma (IDH3G) in the apparent ratio of 2:1:1. The heterodimer containing one IDH3A and one IDH3B subunit and the heterodimer containing one IDH3A and one IDH3G subunit assemble into a heterotetramer (which contains two subunits of IDH3A, one of IDH3B and one of IDH3G) and further into the heterooctamer. The cofactor is Mg(2+). It depends on Mn(2+) as a cofactor.

The protein resides in the mitochondrion. The heterotetramer and the heterodimer composed of IDH3A and IDH3G subunits can be allosterically activated by citrate (CIT) or/and ADP, and the two activators can act independently or synergistically. The heterodimer composed of IDH3A and IDH3B subunits cannot be allosterically regulated and the allosteric regulation of the heterotetramer is through the IDH3G subunit and not the IDH3B subunit. The IDH3G subunit contains the allosteric site which consists of a CIT-binding site and an ADP-binding site, and the binding of CIT and ADP causes conformational changes at the allosteric site which are transmitted to the active site in the catalytic subunit (IDH3A) through a cascade of conformational changes at the heterodimer interface, leading to stabilization of the isocitrate-binding at the active site and thus activation of the enzyme. ATP can activate the heterotetramer and the heterodimer composed of IDH3A and IDH3G subunits at low concentrations but inhibits their activities at high concentrations, whereas ATP exhibits only inhibitory effect on the heterodimer composed of IDH3A and IDH3B subunits. Functionally, regulatory subunit which plays a role in the allosteric regulation of the enzyme catalyzing the decarboxylation of isocitrate (ICT) into alpha-ketoglutarate. The heterodimer composed of the alpha (IDH3A) and beta (IDH3B) subunits and the heterodimer composed of the alpha (IDH3A) and gamma (IDH3G) subunits, have considerable basal activity but the full activity of the heterotetramer (containing two subunits of IDH3A, one of IDH3B and one of IDH3G) requires the assembly and cooperative function of both heterodimers. This is Probable isocitrate dehydrogenase [NAD] gamma 2, mitochondrial from Mus musculus (Mouse).